Reading from the N-terminus, the 151-residue chain is Transcriptional repressor NrdR (151 aa).

The segment at 3–34 is a zinc-finger region; that stretch reads CPFCNSVDTSVKNSRPSDCKMSVRRRRSCDSC. Positions 49-139 constitute an ATP-cone domain; sequence VKVLKKDGSV…VYMNFSDVND (91 aa).

Belongs to the NrdR family. The cofactor is Zn(2+).

Negatively regulates transcription of bacterial ribonucleotide reductase nrd genes and operons by binding to NrdR-boxes. In Anaplasma marginale (strain Florida), this protein is Transcriptional repressor NrdR.